The following is a 280-amino-acid chain: Tumor necrosis factor ligand superfamily member 6 (280 aa).

The Cytoplasmic portion of the chain corresponds to 1-80 (MQQPLNYPYP…KTRRDHNTGL (80 aa)). Residues 20–71 (SSPWGPPGSVLPCPSSVPGRPGQRRPPPPPPPTLPPPPPPPPLPPLPLPPLK) are disordered. Residues 43–69 (RRPPPPPPPTLPPPPPPPPLPPLPLPP) are compositionally biased toward pro residues. The chain crosses the membrane as a helical; Signal-anchor for type II membrane protein span at residues 81–101 (CLLVMFFMVLVALVGLGLGMF). The Extracellular segment spans residues 102–280 (QLFHLQKELA…SKTFFGLYKL (179 aa)). One can recognise a THD domain in the interval 144–280 (KVAHLTGKPN…SKTFFGLYKL (137 aa)). Asn183 is a glycosylation site (N-linked (GlcNAc...) asparagine). Cys201 and Cys232 are oxidised to a cystine. Residues Asn249 and Asn259 are each glycosylated (N-linked (GlcNAc...) asparagine).

It belongs to the tumor necrosis factor family. In terms of assembly, homotrimer. Interacts with ARHGAP9, BAIAP2L1, BTK, CACNB3, CACNB4, CRK, DLG2, DNMBP, DOCK4, EPS8L3, FGR, FYB1, FYN, HCK, ITK, ITSN2, KALRN, LYN, MACC1, MIA, MPP4, MYO15A, NCF1, NCK1, NCK2, NCKIPSD, OSTF1, PIK3R1, PSTPIP1, RIMBP3C, SAMSN1, SH3GL3, SH3PXD2B, SH3PXD2A, SH3RF2, SKAP2, SNX33, SNX9, SORBS3, SPTA1, SRC, SRGAP1, SRGAP2, SRGAP3, TEC, TJP3 and YES1. The soluble form derives from the membrane form by proteolytic processing. The membrane-bound form undergoes two successive intramembrane proteolytic cleavages. The first one is processed by ADAM10 producing an N-terminal fragment, which lacks the receptor-binding extracellular domain. This ADAM10-processed FasL (FasL APL) remnant form is still membrane anchored and further processed by SPPL2A that liberates the FasL intracellular domain (FasL ICD). FasL shedding by ADAM10 is a prerequisite for subsequent intramembrane cleavage by SPPL2A in T-cells. Post-translationally, phosphorylated by FGR on tyrosine residues; this is required for ubiquitination and subsequent internalization. In terms of processing, N-glycosylated. Glycosylation enhances apoptotic activity. Monoubiquitinated.

Its subcellular location is the cell membrane. It localises to the cytoplasmic vesicle lumen. It is found in the lysosome lumen. The protein resides in the secreted. The protein localises to the nucleus. Cytokine that binds to TNFRSF6/FAS, a receptor that transduces the apoptotic signal into cells. Involved in cytotoxic T-cell-mediated apoptosis, natural killer cell-mediated apoptosis and in T-cell development. Initiates fratricidal/suicidal activation-induced cell death (AICD) in antigen-activated T-cells contributing to the termination of immune responses. TNFRSF6/FAS-mediated apoptosis has also a role in the induction of peripheral tolerance. Binds to TNFRSF6B/DcR3, a decoy receptor that blocks apoptosis. In terms of biological role, induces FAS-mediated activation of NF-kappa-B, initiating non-apoptotic signaling pathways. Can induce apoptosis but does not appear to be essential for this process. Functionally, cytoplasmic form induces gene transcription inhibition. The sequence is that of Tumor necrosis factor ligand superfamily member 6 (FASLG) from Felis catus (Cat).